The chain runs to 788 residues: Protein FAR1-RELATED SEQUENCE 5 (788 aa).

Positions 87–179 (AFYNSYARRI…VKDHNHELVP (93 aa)) constitute an FAR1 domain. Residues 299–395 (TVTFDTTYRS…CKWHILKKCQ (97 aa)) form the MULE domain. The segment at 584–616 (FNVLEMRANCSCQMFEFSGIICRHILAVFRVTN) adopts an SWIM-type zinc-finger fold. Residues 713-733 (SSVTGGKHQQEVLAQPEPEDE) are disordered. Residues 731-768 (EDEMDKKINQLRNELELANRKCEAYRTNLLSVLKEMED) are a coiled coil.

This sequence belongs to the FHY3/FAR1 family. Expressed in hypocotyls, rosette and cauline leaves, inflorescences stems, flowers and siliques.

Its subcellular location is the nucleus. In terms of biological role, putative transcription activator involved in regulating light control of development. The protein is Protein FAR1-RELATED SEQUENCE 5 (FRS5) of Arabidopsis thaliana (Mouse-ear cress).